The sequence spans 177 residues: Large ribosomal subunit protein bL17 (177 aa).

The segment at 136–177 (AEEEAPAVEAEATEAVEAPVEETAAAEAEAPAEEAADAEKAE) is disordered. A compositionally biased stretch (acidic residues) spans 138-149 (EEAPAVEAEATE). Residues 150 to 164 (AVEAPVEETAAAEAE) show a composition bias toward low complexity.

The protein belongs to the bacterial ribosomal protein bL17 family. Part of the 50S ribosomal subunit. Contacts protein L32.

The protein is Large ribosomal subunit protein bL17 of Bifidobacterium longum (strain NCC 2705).